The following is a 440-amino-acid chain: Protein eva-1 homolog C (440 aa).

A compositionally biased stretch (pro residues) spans 1 to 13 (MLLPGHPRPPPAP). A disordered region spans residues 1–23 (MLLPGHPRPPPAPQSAQNQGLRR). Positions 1–48 (MLLPGHPRPPPAPQSAQNQGLRRQVEPPGQLLRLFYCTVLVCSKETSA) are cleaved as a signal peptide. At 49 to 321 (LTDFSGYLTK…AYIRAHPERA (273 aa)) the chain is on the extracellular side. N-linked (GlcNAc...) asparagine glycosylation is found at Asn62, Asn109, and Asn165. The 93-residue stretch at 67–159 (ACDGDYLNLQ…KYLLVSFKCQ (93 aa)) folds into the SUEL-type lectin 1 domain. One can recognise an SUEL-type lectin 2 domain in the interval 168-260 (VCENQELKLH…KYLTVAYACV (93 aa)). A helical transmembrane segment spans residues 322–342 (ALLFMSSVCIGLLLTLCALVI). The Cytoplasmic portion of the chain corresponds to 343–440 (RVSCTKDFRE…SLPRNVGHFY (98 aa)). A disordered region spans residues 364 to 384 (SDKAEEDSEEDLEEEDSSDSQ). Positions 367-381 (AEEDSEEDLEEEDSS) are enriched in acidic residues.

Belongs to the EVA1 family. Ubiquitous.

It localises to the cell membrane. In terms of biological role, binds heparin. The sequence is that of Protein eva-1 homolog C (Eva1c) from Mus musculus (Mouse).